We begin with the raw amino-acid sequence, 392 residues long: Ribosomal RNA large subunit methyltransferase G (392 aa).

It belongs to the methyltransferase superfamily. RlmG family.

It is found in the cytoplasm. The catalysed reaction is guanosine(1835) in 23S rRNA + S-adenosyl-L-methionine = N(2)-methylguanosine(1835) in 23S rRNA + S-adenosyl-L-homocysteine + H(+). Its function is as follows. Specifically methylates the guanine in position 1835 (m2G1835) of 23S rRNA. The protein is Ribosomal RNA large subunit methyltransferase G of Shewanella frigidimarina (strain NCIMB 400).